A 230-amino-acid polypeptide reads, in one-letter code: MASTTLSATPTPSQLSAAKNGAYSPSRALLGKTARGLYPEKEMVSRKVTCQATSIPADRVPDMGKRQTMNLLLLGALSLPTAGMLIPYGAFFVPPSSGGGGGGIVAKDAVGNDIVAAAWLKTHGPGDRTLAQGLRGDPTYLVVENDRSLATYGINAVCTHLGCVVPWNKAENKFLCPCHGSQYNNQGKVVRGPAPLSLALSHCDISEEGKVVFVPWVETDFRTGENPWWS.

Residues 1–16 (MASTTLSATPTPSQLS) are compositionally biased toward low complexity. The segment at 1–20 (MASTTLSATPTPSQLSAAKN) is disordered. Residues 1-56 (MASTTLSATPTPSQLSAAKNGAYSPSRALLGKTARGLYPEKEMVSRKVTCQATSIP) constitute a chloroplast transit peptide. Residues 73–93 (LLGALSLPTAGMLIPYGAFFV) form a helical membrane-spanning segment. A Rieske domain is found at 116 to 212 (AAAWLKTHGP…CDISEEGKVV (97 aa)). [2Fe-2S] cluster contacts are provided by Cys158, His160, Cys176, and His179. Cys163 and Cys178 are disulfide-bonded.

The protein belongs to the Rieske iron-sulfur protein family. In terms of assembly, the 4 large subunits of the cytochrome b6-f complex are cytochrome b6, subunit IV (17 kDa polypeptide, petD), cytochrome f and the Rieske protein, while the 4 small subunits are petG, petL, petM and petN. The complex functions as a dimer. The cofactor is [2Fe-2S] cluster.

Its subcellular location is the plastid. The protein localises to the chloroplast thylakoid membrane. It catalyses the reaction 2 oxidized [plastocyanin] + a plastoquinol + 2 H(+)(in) = 2 reduced [plastocyanin] + a plastoquinone + 4 H(+)(out). In terms of biological role, component of the cytochrome b6-f complex, which mediates electron transfer between photosystem II (PSII) and photosystem I (PSI), cyclic electron flow around PSI, and state transitions. The polypeptide is Cytochrome b6-f complex iron-sulfur subunit, chloroplastic (petC) (Fritillaria agrestis (Stinkbells)).